A 314-amino-acid polypeptide reads, in one-letter code: Olfactory receptor 10A3 (314 aa).

Over 1 to 25 the chain is Extracellular; that stretch reads MKRQNQSCVVEFILLGFSNFPELQV. Residue Asn-5 is glycosylated (N-linked (GlcNAc...) asparagine). A helical membrane pass occupies residues 26–46; sequence QLFGVFLVIYVVTLMGNAIIT. Residues 47–54 are Cytoplasmic-facing; that stretch reads VIISLNQS. Residues 55 to 75 traverse the membrane as a helical segment; that stretch reads LHVPMYLFLLNLSVVEVSFSA. The Extracellular portion of the chain corresponds to 76–99; sequence VITPEMLVVLSTEKTMISFVGCFA. Cys-97 and Cys-189 form a disulfide bridge. A helical membrane pass occupies residues 100 to 120; the sequence is QMYFILLFGGTECFLLGAMAY. At 121 to 139 the chain is on the cytoplasmic side; sequence DRFAAICHPLNYPVIMNRG. Residues 140-160 traverse the membrane as a helical segment; sequence VFMKLVIFSWISGIMVATVQT. Residues 161 to 197 are Extracellular-facing; sequence TWVFSFPFCGPNEINHLFCETPPVLELVCADTFLFEI. A helical transmembrane segment spans residues 198–217; that stretch reads YAFTGTILIVMVPFLLILLS. The Cytoplasmic portion of the chain corresponds to 218–237; it reads YIRVLFAILKMPSTTGRQKA. The chain crosses the membrane as a helical span at residues 238–258; sequence FSTCASHLTSVTLFYGTANMT. At 259-271 the chain is on the extracellular side; the sequence is YLQPKSGYSPETK. A helical transmembrane segment spans residues 272 to 292; the sequence is KLISLAYTLLTPLLNPLIYSL. Residues 293–314 are Cytoplasmic-facing; the sequence is RNSEMKRTLIKLWRRKVILHTF.

Belongs to the G-protein coupled receptor 1 family.

The protein localises to the cell membrane. Odorant receptor. This is Olfactory receptor 10A3 (OR10A3) from Homo sapiens (Human).